Here is a 1488-residue protein sequence, read N- to C-terminus: Phenolphthiocerol/phthiocerol polyketide synthase subunit E (1488 aa).

In terms of domain architecture, Ketosynthase family 3 (KS3) spans E5–E438. Residues C184, H320, and H361 each act as for beta-ketoacyl synthase activity in the active site. The interval V551–V868 is acyltransferase. Catalysis depends on S641, which acts as the For malonyltransferase activity. Positions N930–F1004 constitute a Carrier domain. The residue at position 965 (S965) is an O-(pantetheine 4'-phosphoryl)serine. NADP(+) is bound at residue E1286–L1331.

The cofactor is NADP(+). Pantetheine 4'-phosphate serves as cofactor.

It catalyses the reaction icosanoyl-[(phenol)carboxyphthiodiolenone synthase] + 2 (S)-methylmalonyl-CoA + 3 malonyl-CoA + 5 NADPH + 10 H(+) = C32-carboxyphthiodiolenone-[(phenol)carboxyphthiodiolenone synthase] + 5 CO2 + 5 NADP(+) + 5 CoA + 2 H2O. It carries out the reaction docosanoyl-[(phenol)carboxyphthiodiolenone synthase] + 2 (S)-methylmalonyl-CoA + 3 malonyl-CoA + 5 NADPH + 10 H(+) = C34-carboxyphthiodiolenone-[(phenol)carboxyphthiodiolenone synthase] + 5 CO2 + 5 NADP(+) + 5 CoA + 2 H2O. The catalysed reaction is 17-(4-hydroxyphenyl)heptadecanoyl-[(phenol)carboxyphthiodiolenone synthase] + 2 (S)-methylmalonyl-CoA + 3 malonyl-CoA + 5 NADPH + 10 H(+) = C35-(phenol)carboxyphthiodiolenone-[(phenol)carboxyphthiodiolenone synthase] + 5 CO2 + 5 NADP(+) + 5 CoA + 2 H2O. The enzyme catalyses 19-(4-hydroxyphenyl)nonadecanoyl-[(phenol)carboxyphthiodiolenone synthase] + 2 (S)-methylmalonyl-CoA + 3 malonyl-CoA + 5 NADPH + 10 H(+) = C37-(phenol)carboxyphthiodiolenone-[(phenol)carboxyphthiodiolenone synthase] + 5 CO2 + 5 NADP(+) + 5 CoA + 2 H2O. It participates in lipid metabolism; fatty acid biosynthesis. In terms of biological role, part of the PpsABCDE complex involved in the biosynthesis of the lipid core common to phthiocerols and phenolphthiocerols by successive additions of malonyl-CoA or methylmalonyl-CoA extender units. PpsA can accept as substrate the activated forms of either icosanoyl (C20), docosanoyl (C22) or lignoceroyl (C24) groups from FadD26, or a (4-hydroxyphenyl)-C17 or (4-hydroxyphenyl)-C19 fatty acyl from FadD29. PpsA initiates the biosynthesis and extends its substrate using a malonyl-CoA extender unit. The PpsB and PpsC proteins add the second and third malonyl-CoA extender units. PpsD adds an (R)-methylmalonyl unit and PpsE adds a second (R)-methylmalonyl unit. The incorporation of the methylmalonyl units results in formation of two branched methyl groups in the elongated product. The chain is Phenolphthiocerol/phthiocerol polyketide synthase subunit E (ppsE) from Mycobacterium bovis (strain ATCC BAA-935 / AF2122/97).